We begin with the raw amino-acid sequence, 413 residues long: Gamma-glutamyl phosphate reductase (413 aa).

This sequence belongs to the gamma-glutamyl phosphate reductase family.

The protein localises to the cytoplasm. The catalysed reaction is L-glutamate 5-semialdehyde + phosphate + NADP(+) = L-glutamyl 5-phosphate + NADPH + H(+). Its pathway is amino-acid biosynthesis; L-proline biosynthesis; L-glutamate 5-semialdehyde from L-glutamate: step 2/2. Catalyzes the NADPH-dependent reduction of L-glutamate 5-phosphate into L-glutamate 5-semialdehyde and phosphate. The product spontaneously undergoes cyclization to form 1-pyrroline-5-carboxylate. This chain is Gamma-glutamyl phosphate reductase, found in Leuconostoc mesenteroides subsp. mesenteroides (strain ATCC 8293 / DSM 20343 / BCRC 11652 / CCM 1803 / JCM 6124 / NCDO 523 / NBRC 100496 / NCIMB 8023 / NCTC 12954 / NRRL B-1118 / 37Y).